A 372-amino-acid chain; its full sequence is NAD(P)H-quinone oxidoreductase subunit 1 (372 aa).

8 helical membrane passes run 29-49 (WLPF…LVTV), 97-117 (LLFT…YLVV), 128-148 (LGVA…GLLM), 176-196 (LALA…IDIV), 204-224 (ILGW…IAVL), 254-274 (FALY…LVAV), 308-328 (TLGI…AVLL), and 351-371 (VALV…FAFG).

It belongs to the complex I subunit 1 family. In terms of assembly, NDH-1 is composed of at least 11 different subunits.

The protein resides in the cellular thylakoid membrane. The enzyme catalyses a plastoquinone + NADH + (n+1) H(+)(in) = a plastoquinol + NAD(+) + n H(+)(out). The catalysed reaction is a plastoquinone + NADPH + (n+1) H(+)(in) = a plastoquinol + NADP(+) + n H(+)(out). In terms of biological role, NDH-1 shuttles electrons from an unknown electron donor, via FMN and iron-sulfur (Fe-S) centers, to quinones in the respiratory and/or the photosynthetic chain. The immediate electron acceptor for the enzyme in this species is believed to be plastoquinone. Couples the redox reaction to proton translocation, and thus conserves the redox energy in a proton gradient. This Trichodesmium erythraeum (strain IMS101) protein is NAD(P)H-quinone oxidoreductase subunit 1.